A 309-amino-acid polypeptide reads, in one-letter code: Homoserine O-succinyltransferase (309 aa).

Cys-142 (acyl-thioester intermediate) is an active-site residue. Residues Lys-163 and Ser-192 each contribute to the substrate site. The Proton acceptor role is filled by His-235. Residue Glu-237 is part of the active site. Arg-249 lines the substrate pocket.

Belongs to the MetA family. Homodimer.

The protein localises to the cytoplasm. The catalysed reaction is L-homoserine + succinyl-CoA = O-succinyl-L-homoserine + CoA. Its pathway is amino-acid biosynthesis; L-methionine biosynthesis via de novo pathway; O-succinyl-L-homoserine from L-homoserine: step 1/1. In terms of biological role, transfers a succinyl group from succinyl-CoA to L-homoserine, forming succinyl-L-homoserine. This is Homoserine O-succinyltransferase from Escherichia coli (strain K12 / MC4100 / BW2952).